The chain runs to 523 residues: Translation initiation factor eIF2B subunit delta (523 aa).

The interval 1–154 (MAAVAVAVRE…EHTQADDPTL (154 aa)) is disordered. An N-acetylalanine modification is found at Ala2. Phosphoserine is present on Ser12. Residues 31 to 40 (MTQEEKLQLR) are compositionally biased toward basic and acidic residues. The span at 41 to 51 (KEKKQQKKKRK) shows a compositional bias: basic residues. Thr85 is subject to Phosphothreonine. A compositionally biased stretch (basic and acidic residues) spans 95-120 (TKAELRAERRAKQEAERALKQARKGE). Ser129 carries the post-translational modification Phosphoserine. The may bind the chemical integrated stress response (ISR) inhibitor ISRIB stretch occupies residues 170–179 (RKDYGSKVSL).

It belongs to the eIF-2B alpha/beta/delta subunits family. As to quaternary structure, component of the translation initiation factor 2B (eIF2B) complex which is a heterodecamer of two sets of five different subunits: alpha, beta, gamma, delta and epsilon. Subunits alpha, beta and delta comprise a regulatory subcomplex and subunits epsilon and gamma comprise a catalytic subcomplex. Within the complex, the hexameric regulatory complex resides at the center, with the two heterodimeric catalytic subcomplexes bound on opposite sides.

Its subcellular location is the cytoplasm. The protein resides in the cytosol. With respect to regulation, activated by the chemical integrated stress response (ISR) inhibitor ISRIB which stimulates guanine nucleotide exchange factor activity for both phosphorylated and unphosphorylated eIF2. Acts as a component of the translation initiation factor 2B (eIF2B) complex, which catalyzes the exchange of GDP for GTP on eukaryotic initiation factor 2 (eIF2) gamma subunit. Its guanine nucleotide exchange factor activity is repressed when bound to eIF2 complex phosphorylated on the alpha subunit, thereby limiting the amount of methionyl-initiator methionine tRNA available to the ribosome and consequently global translation is repressed. The sequence is that of Translation initiation factor eIF2B subunit delta (EIF2B4) from Oryctolagus cuniculus (Rabbit).